Reading from the N-terminus, the 494-residue chain is UPF0371 protein Sez_1293 (494 aa).

Belongs to the UPF0371 family.

The sequence is that of UPF0371 protein Sez_1293 from Streptococcus equi subsp. zooepidemicus (strain MGCS10565).